Reading from the N-terminus, the 30-residue chain is Cysteine-rich venom protein hematin (30 aa).

This sequence belongs to the CRISP family. Post-translationally, contains 8 disulfide bonds. In terms of tissue distribution, expressed by the venom gland.

The protein resides in the secreted. Functionally, inhibits calcium-activated potassium channels (KCa), voltage-gated potassium channel (Kv), and the calcium release channel/ryanodine receptor (RyR). In Hemachatus haemachatus (Rinkhals), this protein is Cysteine-rich venom protein hematin.